The sequence spans 61 residues: Large ribosomal subunit protein uL30 (61 aa).

It belongs to the universal ribosomal protein uL30 family. Part of the 50S ribosomal subunit.

The protein is Large ribosomal subunit protein uL30 of Corynebacterium glutamicum (strain ATCC 13032 / DSM 20300 / JCM 1318 / BCRC 11384 / CCUG 27702 / LMG 3730 / NBRC 12168 / NCIMB 10025 / NRRL B-2784 / 534).